Here is a 103-residue protein sequence, read N- to C-terminus: uncharacterized protein (103 aa).

The next 3 membrane-spanning stretches (helical) occupy residues 1–21, 29–49, and 69–89; these read MPGVIFWTIFIIQFMIWVFLS, IAFIWGTMPFLALYLKYTGYF, and VVEWSYLVVQTTVPSWIGLLF.

The protein localises to the cell membrane. This is an uncharacterized protein from Methanocaldococcus jannaschii (strain ATCC 43067 / DSM 2661 / JAL-1 / JCM 10045 / NBRC 100440) (Methanococcus jannaschii).